The chain runs to 357 residues: Tetraacyldisaccharide 4'-kinase (357 aa).

ATP is bound at residue threonine 49–threonine 56.

This sequence belongs to the LpxK family.

The enzyme catalyses a lipid A disaccharide + ATP = a lipid IVA + ADP + H(+). The protein operates within glycolipid biosynthesis; lipid IV(A) biosynthesis; lipid IV(A) from (3R)-3-hydroxytetradecanoyl-[acyl-carrier-protein] and UDP-N-acetyl-alpha-D-glucosamine: step 6/6. Its function is as follows. Transfers the gamma-phosphate of ATP to the 4'-position of a tetraacyldisaccharide 1-phosphate intermediate (termed DS-1-P) to form tetraacyldisaccharide 1,4'-bis-phosphate (lipid IVA). This is Tetraacyldisaccharide 4'-kinase from Porphyromonas gingivalis (strain ATCC BAA-308 / W83).